The following is a 276-amino-acid chain: Shikimate dehydrogenase (NADP(+)) (276 aa).

Shikimate contacts are provided by residues 19–21 (SKS) and threonine 66. Lysine 70 serves as the catalytic Proton acceptor. Aspartate 82 provides a ligand contact to NADP(+). Shikimate contacts are provided by asparagine 91 and aspartate 107. Residues 133–137 (GAGGA), 157–162 (NRTRSR), and leucine 222 contribute to the NADP(+) site. Tyrosine 224 serves as a coordination point for shikimate. Glycine 245 lines the NADP(+) pocket.

Belongs to the shikimate dehydrogenase family. In terms of assembly, homodimer.

The enzyme catalyses shikimate + NADP(+) = 3-dehydroshikimate + NADPH + H(+). Its pathway is metabolic intermediate biosynthesis; chorismate biosynthesis; chorismate from D-erythrose 4-phosphate and phosphoenolpyruvate: step 4/7. Its function is as follows. Involved in the biosynthesis of the chorismate, which leads to the biosynthesis of aromatic amino acids. Catalyzes the reversible NADPH linked reduction of 3-dehydroshikimate (DHSA) to yield shikimate (SA). In Ruegeria sp. (strain TM1040) (Silicibacter sp.), this protein is Shikimate dehydrogenase (NADP(+)).